Reading from the N-terminus, the 444-residue chain is Pestheic acid cluster transcriptional regulator 2 (444 aa).

A compositionally biased stretch (polar residues) spans 1–22; the sequence is MEAADPNNNLTITSPSTLLSNP. The segment at 1–31 is disordered; the sequence is MEAADPNNNLTITSPSTLLSNPTQPPAQPLK. Positions 36 to 63 form a DNA-binding region, zn(2)-C6 fungal-type; it reads CHACASSKVKCHKEKPTCSRCRKRGITC. The segment at 326 to 348 is disordered; sequence ARVGSGVSTHTTAGQYEPQVEQQ. Residues 331-348 are compositionally biased toward polar residues; sequence GVSTHTTAGQYEPQVEQQ.

The protein resides in the nucleus. Its function is as follows. Transcription factor that, with ptaR1 and ptaR3, coregulates the expression of the gene cluster that mediates the biosynthesis of pestheic acid, a diphenyl ether which is a biosynthetic precursor of the unique chloropupukeananes. The polypeptide is Pestheic acid cluster transcriptional regulator 2 (Pestalotiopsis fici (strain W106-1 / CGMCC3.15140)).